A 225-amino-acid chain; its full sequence is NAD(P)H-quinone oxidoreductase subunit K, chloroplastic (225 aa).

[4Fe-4S] cluster-binding residues include Cys-43, Cys-44, Cys-108, and Cys-139.

Belongs to the complex I 20 kDa subunit family. In terms of assembly, NDH is composed of at least 16 different subunits, 5 of which are encoded in the nucleus. The cofactor is [4Fe-4S] cluster.

It is found in the plastid. Its subcellular location is the chloroplast thylakoid membrane. The enzyme catalyses a plastoquinone + NADH + (n+1) H(+)(in) = a plastoquinol + NAD(+) + n H(+)(out). The catalysed reaction is a plastoquinone + NADPH + (n+1) H(+)(in) = a plastoquinol + NADP(+) + n H(+)(out). In terms of biological role, NDH shuttles electrons from NAD(P)H:plastoquinone, via FMN and iron-sulfur (Fe-S) centers, to quinones in the photosynthetic chain and possibly in a chloroplast respiratory chain. The immediate electron acceptor for the enzyme in this species is believed to be plastoquinone. Couples the redox reaction to proton translocation, and thus conserves the redox energy in a proton gradient. This chain is NAD(P)H-quinone oxidoreductase subunit K, chloroplastic, found in Helianthus annuus (Common sunflower).